A 752-amino-acid polypeptide reads, in one-letter code: Zinc finger protein 425 (752 aa).

One can recognise a KRAB domain in the interval 9–80 (VTFDDVALYF…EQGCLDKTRR (72 aa)). 19 consecutive C2H2-type zinc fingers follow at residues 190 to 212 (YSCY…KRSH), 246 to 268 (FQCS…QVVH), 274 to 296 (YPCP…LCLH), 302 to 324 (FCCG…LRLH), 330 to 352 (FQCP…LTQH), 358 to 380 (FHCP…QRTH), 386 to 408 (FSCG…IRVH), 414 to 436 (FSCP…GLQH), 442 to 464 (FQCP…QRLH), 470 to 492 (FPCA…TRVH), 498 to 520 (FPCG…LKVH), 526 to 548 (FSCA…TRLH), 554 to 576 (FQCP…QRMH), 582 to 604 (FACG…LRLH), 610 to 632 (YQCP…LLQH), 638 to 660 (FSCV…IRVH), 666 to 688 (FQCP…LYKH), 694 to 716 (FQCP…LCLH), and 722 to 744 (FSCD…IAVH).

This sequence belongs to the krueppel C2H2-type zinc-finger protein family.

It is found in the nucleus. The protein resides in the cytoplasm. In terms of biological role, acts as a transcriptional repressor. In Homo sapiens (Human), this protein is Zinc finger protein 425 (ZNF425).